The sequence spans 312 residues: Glycerol-3-phosphate dehydrogenase [NAD(P)+] (312 aa).

Positions 11, 30, 31, and 95 each coordinate NADPH. 3 residues coordinate sn-glycerol 3-phosphate: K95, G123, and S125. A127 lines the NADPH pocket. Positions 177, 230, 240, 241, and 242 each coordinate sn-glycerol 3-phosphate. K177 serves as the catalytic Proton acceptor. R241 lines the NADPH pocket. The NADPH site is built by V265 and E267.

It belongs to the NAD-dependent glycerol-3-phosphate dehydrogenase family.

The protein localises to the cytoplasm. It catalyses the reaction sn-glycerol 3-phosphate + NAD(+) = dihydroxyacetone phosphate + NADH + H(+). The enzyme catalyses sn-glycerol 3-phosphate + NADP(+) = dihydroxyacetone phosphate + NADPH + H(+). The protein operates within membrane lipid metabolism; glycerophospholipid metabolism. Catalyzes the reduction of the glycolytic intermediate dihydroxyacetone phosphate (DHAP) to sn-glycerol 3-phosphate (G3P), the key precursor for phospholipid synthesis. In Helicobacter pylori (strain Shi470), this protein is Glycerol-3-phosphate dehydrogenase [NAD(P)+].